A 221-amino-acid polypeptide reads, in one-letter code: Pyridoxine/pyridoxamine 5'-phosphate oxidase (221 aa).

Residues 14–17 (RNEY) and K73 contribute to the substrate site. Residues 68–73 (RTVLLK), 83–84 (FT), K90, and Q112 each bind FMN. The substrate site is built by Y130, R134, and S138. FMN is bound by residues 147–148 (QS) and W193. Residue 199–201 (RLH) coordinates substrate. R203 provides a ligand contact to FMN.

It belongs to the pyridoxamine 5'-phosphate oxidase family. As to quaternary structure, homodimer. FMN is required as a cofactor.

It catalyses the reaction pyridoxamine 5'-phosphate + O2 + H2O = pyridoxal 5'-phosphate + H2O2 + NH4(+). The enzyme catalyses pyridoxine 5'-phosphate + O2 = pyridoxal 5'-phosphate + H2O2. It functions in the pathway cofactor metabolism; pyridoxal 5'-phosphate salvage; pyridoxal 5'-phosphate from pyridoxamine 5'-phosphate: step 1/1. It participates in cofactor metabolism; pyridoxal 5'-phosphate salvage; pyridoxal 5'-phosphate from pyridoxine 5'-phosphate: step 1/1. Functionally, catalyzes the oxidation of either pyridoxine 5'-phosphate (PNP) or pyridoxamine 5'-phosphate (PMP) into pyridoxal 5'-phosphate (PLP). The sequence is that of Pyridoxine/pyridoxamine 5'-phosphate oxidase from Salinispora arenicola (strain CNS-205).